The primary structure comprises 65 residues: Large ribosomal subunit protein bL35 (65 aa).

Belongs to the bacterial ribosomal protein bL35 family.

The chain is Large ribosomal subunit protein bL35 from Magnetococcus marinus (strain ATCC BAA-1437 / JCM 17883 / MC-1).